Here is a 319-residue protein sequence, read N- to C-terminus: Glutathione synthetase (319 aa).

Positions 129–314 constitute an ATP-grasp domain; it reads KLAILNFSRF…VAAMFADAVA (186 aa). 155-211 contributes to the ATP binding site; sequence LKEHGDIIIKPLDGMGGMGIFRLTEKDPNIGSILETLMQLDSRTIMAQRYIPEIVHG. Mg(2+) contacts are provided by glutamate 285 and asparagine 287.

It belongs to the prokaryotic GSH synthase family. The cofactor is Mg(2+). Mn(2+) serves as cofactor.

The enzyme catalyses gamma-L-glutamyl-L-cysteine + glycine + ATP = glutathione + ADP + phosphate + H(+). Its pathway is sulfur metabolism; glutathione biosynthesis; glutathione from L-cysteine and L-glutamate: step 2/2. This Neisseria meningitidis serogroup B (strain ATCC BAA-335 / MC58) protein is Glutathione synthetase.